The primary structure comprises 365 residues: Phospho-N-acetylmuramoyl-pentapeptide-transferase (365 aa).

Transmembrane regions (helical) follow at residues valine 29–tryptophan 49, glycine 73–tryptophan 93, serine 97–valine 117, isoleucine 133–isoleucine 153, isoleucine 171–serine 191, glycine 202–valine 222, leucine 242–tyrosine 262, isoleucine 266–leucine 286, tyrosine 291–valine 311, and isoleucine 341–isoleucine 361.

The protein belongs to the glycosyltransferase 4 family. MraY subfamily. Mg(2+) serves as cofactor.

It localises to the cell inner membrane. It catalyses the reaction UDP-N-acetyl-alpha-D-muramoyl-L-alanyl-gamma-D-glutamyl-meso-2,6-diaminopimeloyl-D-alanyl-D-alanine + di-trans,octa-cis-undecaprenyl phosphate = di-trans,octa-cis-undecaprenyl diphospho-N-acetyl-alpha-D-muramoyl-L-alanyl-D-glutamyl-meso-2,6-diaminopimeloyl-D-alanyl-D-alanine + UMP. The protein operates within cell wall biogenesis; peptidoglycan biosynthesis. Catalyzes the initial step of the lipid cycle reactions in the biosynthesis of the cell wall peptidoglycan: transfers peptidoglycan precursor phospho-MurNAc-pentapeptide from UDP-MurNAc-pentapeptide onto the lipid carrier undecaprenyl phosphate, yielding undecaprenyl-pyrophosphoryl-MurNAc-pentapeptide, known as lipid I. This Blochmanniella floridana protein is Phospho-N-acetylmuramoyl-pentapeptide-transferase.